The chain runs to 578 residues: Proline--tRNA ligase (578 aa).

The protein belongs to the class-II aminoacyl-tRNA synthetase family. ProS type 1 subfamily. Homodimer.

It localises to the cytoplasm. The catalysed reaction is tRNA(Pro) + L-proline + ATP = L-prolyl-tRNA(Pro) + AMP + diphosphate. Its function is as follows. Catalyzes the attachment of proline to tRNA(Pro) in a two-step reaction: proline is first activated by ATP to form Pro-AMP and then transferred to the acceptor end of tRNA(Pro). As ProRS can inadvertently accommodate and process non-cognate amino acids such as alanine and cysteine, to avoid such errors it has two additional distinct editing activities against alanine. One activity is designated as 'pretransfer' editing and involves the tRNA(Pro)-independent hydrolysis of activated Ala-AMP. The other activity is designated 'posttransfer' editing and involves deacylation of mischarged Ala-tRNA(Pro). The misacylated Cys-tRNA(Pro) is not edited by ProRS. This chain is Proline--tRNA ligase, found in Burkholderia orbicola (strain AU 1054).